Here is a 208-residue protein sequence, read N- to C-terminus: uncharacterized protein (208 aa).

3 disordered regions span residues 91 to 115 (PGQA…PSQD), 127 to 156 (QSWS…KRPG), and 182 to 208 (NKLG…RKFK). A compositionally biased stretch (polar residues) spans 127–136 (QSWSSGTSRP).

This is an uncharacterized protein from Rattus norvegicus (Rat).